We begin with the raw amino-acid sequence, 361 residues long: Elongator complex protein 4 (361 aa).

2 disordered regions span residues 93–124 (QLPG…PQQE) and 338–361 (DDEQ…SLDF). Composition is skewed to polar residues over residues 104–121 (NENS…SKNP) and 346–355 (ISNTNPQKQP).

It belongs to the ELP4 family. As to quaternary structure, component of the elongator complex.

Its subcellular location is the cytoplasm. It is found in the nucleus. Its pathway is tRNA modification; 5-methoxycarbonylmethyl-2-thiouridine-tRNA biosynthesis. Functionally, component of the elongator complex, a multiprotein complex which is required for multiple tRNA modifications, including mcm5U (5-methoxycarbonylmethyl uridine), mcm5s2U (5-methoxycarbonylmethyl-2-thiouridine), and ncm5U (5-carbamoylmethyl uridine). The elongator complex catalyzes formation of carboxymethyluridine in the wobble base at position 34 in tRNAs. This Schizosaccharomyces pombe (strain 972 / ATCC 24843) (Fission yeast) protein is Elongator complex protein 4.